The sequence spans 275 residues: Adenylate kinase (275 aa).

54-59 serves as a coordination point for ATP; it reads GAGKGT. Residues 74 to 103 are NMP; the sequence is ATGDMLRSQVAKKTPLGREAKKIMDQGGLV. Residues Thr-75, Arg-80, 101 to 103, 130 to 133, and Gln-137 contribute to the AMP site; these read GLV and GFPR. Residues 171-208 are LID; sequence GRLVHPASGRSYHRVFNPPKAEMKDDITGEPLVSRSDD. ATP-binding positions include Arg-172 and 181–182; that span reads SY. Residues Arg-205 and Arg-216 each contribute to the AMP site. Gln-244 serves as a coordination point for ATP.

Belongs to the adenylate kinase family. AK2 subfamily. As to quaternary structure, monomer.

It localises to the cytoplasm. The protein localises to the cytosol. The protein resides in the mitochondrion intermembrane space. The enzyme catalyses AMP + ATP = 2 ADP. Its function is as follows. Catalyzes the reversible transfer of the terminal phosphate group between ATP and AMP. Plays an important role in cellular energy homeostasis and in adenine nucleotide metabolism. Adenylate kinase activity is critical for regulation of the phosphate utilization and the AMP de novo biosynthesis pathways. The chain is Adenylate kinase (adk1) from Sclerotinia sclerotiorum (strain ATCC 18683 / 1980 / Ss-1) (White mold).